The sequence spans 197 residues: Small ribosomal subunit protein uS7 (197 aa).

Belongs to the universal ribosomal protein uS7 family.

This chain is Small ribosomal subunit protein uS7 (RPS5), found in Cicer arietinum (Chickpea).